A 255-amino-acid polypeptide reads, in one-letter code: U2 small nuclear ribonucleoprotein A' (255 aa).

LRR repeat units follow at residues 20–41 (RDRELDLRGYKIPVIENLGATL), 43–64 (QFDAIDFSDNEIRKLDGFPLLR), 65–86 (RLKTLLVNNNRICRIGEGLDQA), and 89–110 (CLTELILTNNSLVELGDLDPLA). Positions 123 to 161 (NPVTNKKHYRLYVIYKVPQVRVLDFQKVKLKERQEAEKM) constitute an LRRCT domain. Lys172 carries the N6-acetyllysine; alternate modification. Residue Lys172 forms a Glycyl lysine isopeptide (Lys-Gly) (interchain with G-Cter in SUMO2); alternate linkage. A disordered region spans residues 174–201 (IARRSKTFNPGAGLPTDKKKGGPSPGDV). Phosphoserine is present on residues Ser178 and Ser197. Lys221 is covalently cross-linked (Glycyl lysine isopeptide (Lys-Gly) (interchain with G-Cter in SUMO2)). Residues 222-255 (GLLQSGQIPGRERRSGPTDDGEEEMEEDTVTNGS) are disordered. Phosphoserine is present on residues Ser236 and Ser255. A compositionally biased stretch (acidic residues) spans 240-255 (DDGEEEMEEDTVTNGS).

It belongs to the U2 small nuclear ribonucleoprotein A family. Identified in the spliceosome B complex. Identified in the spliceosome C complex. Found in a pre-mRNA splicing complex with SFRS4, SFRS5, SNRNP70, SNRPA1, SRRM1 and SRRM2. Found in a pre-mRNA exonic splicing enhancer (ESE) complex with SNRNP70, SNRPA1, SRRM1 and TRA2B. Contributes to the binding of stem loop IV of U2 snRNA with SNRPB2.

Its subcellular location is the nucleus. Functionally, involved in pre-mRNA splicing as component of the spliceosome. Associated with sn-RNP U2, where it contributes to the binding of stem loop IV of U2 snRNA. This Homo sapiens (Human) protein is U2 small nuclear ribonucleoprotein A' (SNRPA1).